A 109-amino-acid chain; its full sequence is uncharacterized protein (109 aa).

The helical transmembrane segment at 75 to 95 threads the bilayer; that stretch reads MALFHTVFILWPHFCGILWTV.

It localises to the membrane. This is an uncharacterized protein from Saccharomyces cerevisiae (strain ATCC 204508 / S288c) (Baker's yeast).